The following is a 217-amino-acid chain: Adenylate kinase (217 aa).

10 to 15 (GAGKGT) is an ATP binding site. Positions 30 to 59 (STGDMFRAAMKNETELGLKAKSFIDAGDLV) are NMP. Residues threonine 31, arginine 36, 57-59 (DLV), 85-88 (GFPR), and glutamine 92 contribute to the AMP site. The LID stretch occupies residues 126 to 163 (GRRVSPTTGKTYHIVYNPPKVEGKCDIDGSDLIQRDDD). Residues arginine 127 and 136–137 (TY) contribute to the ATP site. Positions 160 and 171 each coordinate AMP. Residue glutamine 199 participates in ATP binding.

The protein belongs to the adenylate kinase family. In terms of assembly, monomer.

It is found in the cytoplasm. The catalysed reaction is AMP + ATP = 2 ADP. It participates in purine metabolism; AMP biosynthesis via salvage pathway; AMP from ADP: step 1/1. Its function is as follows. Catalyzes the reversible transfer of the terminal phosphate group between ATP and AMP. Plays an important role in cellular energy homeostasis and in adenine nucleotide metabolism. This chain is Adenylate kinase, found in Shouchella clausii (strain KSM-K16) (Alkalihalobacillus clausii).